A 263-amino-acid chain; its full sequence is MVSMRDLLECGVHFGHQTRRWNPKMKKFIFGERKGIYVIDLQKTLRYFRYTYNIVRDAAAEGKTILFVGTKKQAGGAIKEYAEKCGMPYVNHRWLGGMMTNFGTIRQSIRKLEVIEKMEEDGSIKLLTKKEALMLTRKKEKLLAYLGGIRYMKTQPDMIFVIDTVKEKIAVQEANRLRIPVVAPLDTNCDPDLVTYPIPGNDDAIRSVQLFCQEMAEAINEGKALREQDGEALVNEEKEITDEEKKEVLDEAMSEEDFGEEQE.

Over residues 230-249 (GEALVNEEKEITDEEKKEVL) the composition is skewed to basic and acidic residues. The segment at 230 to 263 (GEALVNEEKEITDEEKKEVLDEAMSEEDFGEEQE) is disordered. Residues 250-263 (DEAMSEEDFGEEQE) show a composition bias toward acidic residues.

Belongs to the universal ribosomal protein uS2 family.

The protein is Small ribosomal subunit protein uS2 of Campylobacter jejuni subsp. jejuni serotype O:2 (strain ATCC 700819 / NCTC 11168).